Reading from the N-terminus, the 159-residue chain is 6,7-dimethyl-8-ribityllumazine synthase (159 aa).

Residues phenylalanine 23, 58 to 60 (AYE), and 82 to 84 (TII) contribute to the 5-amino-6-(D-ribitylamino)uracil site. The active-site Proton donor is the histidine 90. Leucine 115 lines the 5-amino-6-(D-ribitylamino)uracil pocket. A (2S)-2-hydroxy-3-oxobutyl phosphate-binding site is contributed by arginine 129.

It belongs to the DMRL synthase family. In terms of assembly, forms an icosahedral capsid composed of 60 subunits, arranged as a dodecamer of pentamers.

The enzyme catalyses (2S)-2-hydroxy-3-oxobutyl phosphate + 5-amino-6-(D-ribitylamino)uracil = 6,7-dimethyl-8-(1-D-ribityl)lumazine + phosphate + 2 H2O + H(+). The protein operates within cofactor biosynthesis; riboflavin biosynthesis; riboflavin from 2-hydroxy-3-oxobutyl phosphate and 5-amino-6-(D-ribitylamino)uracil: step 1/2. In terms of biological role, catalyzes the formation of 6,7-dimethyl-8-ribityllumazine by condensation of 5-amino-6-(D-ribitylamino)uracil with 3,4-dihydroxy-2-butanone 4-phosphate. This is the penultimate step in the biosynthesis of riboflavin. The polypeptide is 6,7-dimethyl-8-ribityllumazine synthase (Blochmanniella floridana).